We begin with the raw amino-acid sequence, 45 residues long: Major cold shock protein (45 aa).

One can recognise a CSD domain in the interval 1–45 (EKGFGFISTENGQDVFAHFSAIQTNGFKTLEEGQKVEFDVEEGQR).

Homodimer.

The protein resides in the cytoplasm. This Streptococcus dysgalactiae protein is Major cold shock protein (cspA).